The chain runs to 280 residues: Inhibitor of growth protein 2 (280 aa).

Residues 48 to 120 (VLRELDNKYQ…VENRARQMEL (73 aa)) are a coiled coil. The interval 122–204 (SQCFQDPAES…KQEREASPVE (83 aa)) is disordered. Over residues 130–140 (ESERASDKAKM) the composition is skewed to basic and acidic residues. The span at 181–193 (KKSKSAKKKKRSK) shows a compositional bias: basic residues. Residue K195 forms a Glycyl lysine isopeptide (Lys-Gly) (interchain with G-Cter in SUMO1) linkage. The PHD-type zinc-finger motif lies at 212–261 (PTYCLCNQVSYGEMIGCDNEQCPIEWFHFSCVSLTYKPKGKWYCPKCRGD). Zn(2+) contacts are provided by C215, C217, C228, C233, H239, C242, C255, and C258. A compositionally biased stretch (basic and acidic residues) spans 258–274 (CRGDNEKTMDKSTEKTK). Residues 258-280 (CRGDNEKTMDKSTEKTKKDRRSR) form a disordered region. Residues 264–280 (KTMDKSTEKTKKDRRSR) form a PBR region.

This sequence belongs to the ING family. Interacts with H3K4me3 and to a lesser extent with H3K4me2. Component of a mSin3A-like complex at least consisting of SIN3A, HDAC1, HDAC2, RBBP4/RbAp48, RBBP7/RbAp46, SAP30 and ING2. Sumoylation enhances its association with SIN3A and is required for binding to some target gene promoters, this is the case for TMEM71. As to expression, widely expressed. Higher expressed in colon-cancer tumor than in normal colon tissues.

It localises to the nucleus. In terms of biological role, seems to be involved in p53/TP53 activation and p53/TP53-dependent apoptotic pathways, probably by enhancing acetylation of p53/TP53. Component of a mSin3A-like corepressor complex, which is probably involved in deacetylation of nucleosomal histones. ING2 activity seems to be modulated by binding to phosphoinositides (PtdInsPs). This chain is Inhibitor of growth protein 2 (ING2), found in Homo sapiens (Human).